Consider the following 455-residue polypeptide: Inactive peptidyl-prolyl cis-trans isomerase shutdown (455 aa).

A disordered region spans residues 34–54 (SQQNHARDLGLDSDSDSDYED). Positions 44–54 (LDSDSDSDYED) are enriched in acidic residues. Residues 103 to 192 (KARVSVRYSG…LFKVEVIDYS (90 aa)) enclose the PPIase FKBP-type domain. 2 TPR repeats span residues 218–251 (AVDL…LNYC) and 303–336 (CKAL…QPAN).

Belongs to the FKBP6 family. As to quaternary structure, interacts with Hsp83. As to expression, strongly expressed in the germline stem cells and in 16-cell cysts. Present in the germ cells throughout embryogenesis. Defects are due to derepression of transposable elements and impaired piRNA biogenesis.

The protein localises to the cytoplasm. Its subcellular location is the cytoplasmic ribonucleoprotein granule. Functionally, co-chaperone required during oogenesis to repress transposable elements and prevent their mobilization, which is essential for the germline integrity. Acts via the piRNA metabolic process, which mediates the repression of transposable elements during meiosis by forming complexes composed of piRNAs and Piwi proteins and govern the methylation and subsequent repression of transposons. Acts as a co-chaperone via its interaction with Hsp83/HSP90 and is required for the biogenesis of all three piRNA major populations. This chain is Inactive peptidyl-prolyl cis-trans isomerase shutdown, found in Drosophila melanogaster (Fruit fly).